A 441-amino-acid chain; its full sequence is Glutamate--tRNA ligase 2 (441 aa).

The short motif at 9–19 (PSPTGYIHVGN) is the 'HIGH' region element. Positions 239 to 243 (ALSKR) match the 'KMSKS' region motif. K242 is an ATP binding site.

It belongs to the class-I aminoacyl-tRNA synthetase family. Glutamate--tRNA ligase type 1 subfamily. Monomer.

It localises to the cytoplasm. The enzyme catalyses tRNA(Glu) + L-glutamate + ATP = L-glutamyl-tRNA(Glu) + AMP + diphosphate. Its function is as follows. Catalyzes the attachment of glutamate to tRNA(Glu) in a two-step reaction: glutamate is first activated by ATP to form Glu-AMP and then transferred to the acceptor end of tRNA(Glu). This chain is Glutamate--tRNA ligase 2, found in Cereibacter sphaeroides (strain ATCC 17023 / DSM 158 / JCM 6121 / CCUG 31486 / LMG 2827 / NBRC 12203 / NCIMB 8253 / ATH 2.4.1.) (Rhodobacter sphaeroides).